The sequence spans 648 residues: Beta-glucuronidase (648 aa).

The first 22 residues, 1 to 22, serve as a signal peptide directing secretion; the sequence is MSLKWSACWVALGQLLCSCALA. 2 N-linked (GlcNAc...) asparagine glycosylation sites follow: Asn172 and Asn416. The Proton donor role is filled by Glu447. The N-linked (GlcNAc...) asparagine glycan is linked to Asn627.

The protein belongs to the glycosyl hydrolase 2 family. In terms of assembly, homotetramer.

The protein localises to the lysosome. The protein resides in the endoplasmic reticulum. It catalyses the reaction a beta-D-glucuronoside + H2O = D-glucuronate + an alcohol. Inhibited by L-aspartic acid. Functionally, plays an important role in the degradation of dermatan and keratan sulfates. The chain is Beta-glucuronidase (Gusb) from Mus musculus (Mouse).